We begin with the raw amino-acid sequence, 567 residues long: MNVQKSNNAEETITPFSEESSLLNSNSYIPATFVDPTTIPQTSTEDIDIHGFNSIFDIPNLAWIEVSLLLNVFLAGFDGTVTASAYTTIGEEFHAANLASWITTSYLITSTTFQPLYGSFSDVLGRRVCLFMASGLFCLGCLWCYFSSGMVSLIFARSFMGIGGGGLITLSTIINSDIIPTRNRGLFQAFQNLLLGFGAICGASFGGVLSEVFSWRLCFLVQVPFSVLSIAVGFFFVKNQSGYSRFHHYCVLFKKIDILGGLLLVSGLTSLLLVLTFGSSRSIQTYRPSQLLLLLGILCIVAFVYVESITEAAPIIPLKLLKGLYSSLVLTTGFLIGLAGYAYLFTLPLFFQLVLGDSPSKAGLRLALPSLSTPIGGLICGILMHRNFRVGKLLFSGVFLMSLGYFLSLFIHPGISPIVLGIFLIPANVGQGIGFPSSLFSFIFAFPQNSHATSTSTLYLIRSIGSLFGVGGLSAVIQLTLRKKMLADLTKFTDLDSKSIQKIIHDVSKSISALYELPEAIQEIVLSDYTFSIRKAQQFTTICCVLALGLCILKDTIKPRTPSGFRY.

12 helical membrane-spanning segments follow: residues 136–156 (LFCL…LIFA), 159–179 (FMGI…SDII), 193–213 (LLLG…SEVF), 217–237 (LCFL…FFFV), 258–278 (ILGG…LTFG), 291–311 (LLLL…SITE), 334–354 (FLIG…FQLV), 364–384 (LRLA…GILM), 393–415 (LLFS…HPGI), 426–446 (PANV…IFAF), 457–477 (TLYL…SAVI), and 536–553 (AQQF…LCIL).

Belongs to the major facilitator superfamily.

The protein resides in the membrane. This is an uncharacterized protein from Schizosaccharomyces pombe (strain 972 / ATCC 24843) (Fission yeast).